A 405-amino-acid chain; its full sequence is Obg-like ATPase homolog (405 aa).

Positions 17-283 (PTSGIVGLAN…CKGIASEYFD (267 aa)) constitute an OBG-type G domain. Residues 26-31 (NVGKST) and valine 231 each bind ATP. The TGS domain maps to 312–398 (NLISFFTCGP…QDNDIALFKA (87 aa)).

This sequence belongs to the TRAFAC class OBG-HflX-like GTPase superfamily. OBG GTPase family.

Its subcellular location is the mitochondrion. Hydrolyzes ATP, and can also hydrolyze GTP with lower efficiency. Has lower affinity for GTP. The chain is Obg-like ATPase homolog (YLF2) from Saccharomyces cerevisiae (strain ATCC 204508 / S288c) (Baker's yeast).